Here is a 393-residue protein sequence, read N- to C-terminus: NAD(P)H-quinone oxidoreductase subunit H, chloroplastic (393 aa).

The protein belongs to the complex I 49 kDa subunit family. As to quaternary structure, NDH is composed of at least 16 different subunits, 5 of which are encoded in the nucleus.

It is found in the plastid. The protein resides in the chloroplast thylakoid membrane. It carries out the reaction a plastoquinone + NADH + (n+1) H(+)(in) = a plastoquinol + NAD(+) + n H(+)(out). The enzyme catalyses a plastoquinone + NADPH + (n+1) H(+)(in) = a plastoquinol + NADP(+) + n H(+)(out). In terms of biological role, NDH shuttles electrons from NAD(P)H:plastoquinone, via FMN and iron-sulfur (Fe-S) centers, to quinones in the photosynthetic chain and possibly in a chloroplast respiratory chain. The immediate electron acceptor for the enzyme in this species is believed to be plastoquinone. Couples the redox reaction to proton translocation, and thus conserves the redox energy in a proton gradient. This is NAD(P)H-quinone oxidoreductase subunit H, chloroplastic from Huperzia lucidula (Shining clubmoss).